A 192-amino-acid polypeptide reads, in one-letter code: Ion-translocating oxidoreductase complex subunit A (192 aa).

6 helical membrane-spanning segments follow: residues 5-25, 39-59, 65-85, 102-122, 134-154, and 171-191; these read LLLL…FLGL, IGMS…SYLV, LPFD…AVVV, ALGI…VALL, AIYG…FSAM, and AIAM…TGLV.

The protein belongs to the NqrDE/RnfAE family. In terms of assembly, the complex is composed of six subunits: RnfA, RnfB, RnfC, RnfD, RnfE and RnfG.

The protein localises to the cell inner membrane. In terms of biological role, part of a membrane-bound complex that couples electron transfer with translocation of ions across the membrane. The polypeptide is Ion-translocating oxidoreductase complex subunit A (Shewanella sp. (strain ANA-3)).